Reading from the N-terminus, the 364-residue chain is 1-acyl-sn-glycerol-3-phosphate acyltransferase epsilon (364 aa).

2 helical membrane passes run 15-35 (LLPS…WGVW) and 61-81 (MVLF…GDLP). An HXXXXD motif motif is present at residues 93 to 98 (HQSTVD). A helical transmembrane segment spans residues 344–364 (LYVNTWIYGTLLGCLWVTIKA).

It belongs to the 1-acyl-sn-glycerol-3-phosphate acyltransferase family. Widely expressed.

The protein resides in the endoplasmic reticulum membrane. It localises to the nucleus envelope. The protein localises to the mitochondrion. It carries out the reaction a 1-acyl-sn-glycero-3-phosphate + an acyl-CoA = a 1,2-diacyl-sn-glycero-3-phosphate + CoA. The enzyme catalyses 1-(9Z-octadecenoyl)-sn-glycero-3-phosphate + tetradecanoyl-CoA = 1-(9Z)-octadecenoyl-2-tetradecanoyl-sn-glycero-3-phosphate + CoA. It catalyses the reaction pentadecanoyl-CoA + 1-(9Z-octadecenoyl)-sn-glycero-3-phosphate = 1-(9Z)-octadecenoyl-2-pentadecanoyl-sn-glycero-3-phosphate + CoA. The catalysed reaction is 1-(9Z-octadecenoyl)-sn-glycero-3-phosphate + octadecanoyl-CoA = 1-(9Z-octadecenoyl)-2-octadecanoyl-sn-glycero-3-phosphate + CoA. It carries out the reaction nonadecanoyl-CoA + 1-(9Z-octadecenoyl)-sn-glycero-3-phosphate = 1-(9Z)-octadecenoyl-2-nonadecanoyl-sn-glycero-3-phosphate + CoA. The enzyme catalyses 1-(9Z-octadecenoyl)-sn-glycero-3-phosphoethanolamine + (9Z)-octadecenoyl-CoA = 1,2-di-(9Z-octadecenoyl)-sn-glycero-3-phosphoethanolamine + CoA. It catalyses the reaction 1-(9Z-octadecenoyl)-sn-glycero-3-phosphocholine + (9Z)-octadecenoyl-CoA = 1,2-di-(9Z-octadecenoyl)-sn-glycero-3-phosphocholine + CoA. The catalysed reaction is 1-(9Z-octadecenoyl)-sn-glycero-3-phospho-(1D-myo-inositol) + (5Z,8Z,11Z,14Z)-eicosatetraenoyl-CoA = 1-(9Z-octadecenoyl)-2-(5Z,8Z,11Z,14Z-eicosatetraenoyl)-sn-glycero-3-phospho-1D-myo-inositol + CoA. It carries out the reaction 1-(9Z-octadecenoyl)-sn-glycero-3-phospho-L-serine + (9Z)-octadecenoyl-CoA = 1,2-di-(9Z)-octadecenoyl-sn-glycero-3-phospho-L-serine + CoA. The enzyme catalyses 1-(9Z-octadecenoyl)-sn-glycero-3-phospho-L-serine + (5Z,8Z,11Z,14Z)-eicosatetraenoyl-CoA = 1-(9Z-octadecenoyl)-2-(5Z,8Z,11Z,14Z-eicosatetraenoyl)-sn-glycero-3-phospho-L-serine + CoA. It catalyses the reaction 1-hexadecanoyl-sn-glycero-3-phosphate + (9Z)-octadecenoyl-CoA = 1-hexadecanoyl-2-(9Z-octadecenoyl)-sn-glycero-3-phosphate + CoA. The catalysed reaction is 1-heptadecanoyl-sn-glycero-3-phosphate + (9Z)-octadecenoyl-CoA = 1-heptadecanoyl-2-(9Z)-octadecenoyl-sn-glycero-3-phosphate + CoA. It carries out the reaction 1-(5Z,8Z,11Z,14Z-eicosatetraenoyl)-sn-glycero-3-phosphate + (9Z)-octadecenoyl-CoA = 1-(5Z,8Z,11Z,14Z)-eicosatetraenoyl-2-(9Z)-octadecenoyl-sn-glycero-3-phosphate + CoA. The enzyme catalyses 1-octadecanoyl-sn-glycero-3-phosphate + (9Z)-octadecenoyl-CoA = 1-octadecanoyl-2-(9Z-octadecenoyl)-sn-glycero-3-phosphate + CoA. It catalyses the reaction 1-(9Z-octadecenoyl)-sn-glycero-3-phosphate + (5Z,8Z,11Z,14Z)-eicosatetraenoyl-CoA = 1-(9Z)-octadecenoyl-2-(5Z,8Z,11Z,14Z)-eicosatetraenoyl-sn-glycero-3-phosphate + CoA. The catalysed reaction is heptadecanoyl-CoA + 1-(9Z-octadecenoyl)-sn-glycero-3-phosphate = 1-(9Z)-octadecenoyl-2-heptadecanoyl-sn-glycero-3-phosphate + CoA. It carries out the reaction 1-(9Z-octadecenoyl)-sn-glycero-3-phosphocholine + (5Z,8Z,11Z,14Z)-eicosatetraenoyl-CoA = 1-(9Z)-octadecenoyl-2-(5Z,8Z,11Z,14Z)-icosatetraenoyl-sn-glycero-3-phosphocholine + CoA. The enzyme catalyses 1-(9Z-octadecenoyl)-sn-glycero-3-phosphate + (9Z)-octadecenoyl-CoA = 1,2-di-(9Z-octadecenoyl)-sn-glycero-3-phosphate + CoA. It catalyses the reaction 1-(9Z-octadecenoyl)-sn-glycero-3-phosphate + hexadecanoyl-CoA = 1-hexadecanoyl-2-(9Z-octadecenoyl)-sn-glycero-3-phosphate + CoA. Its pathway is phospholipid metabolism; CDP-diacylglycerol biosynthesis; CDP-diacylglycerol from sn-glycerol 3-phosphate: step 2/3. Converts 1-acyl-sn-glycerol-3-phosphate (lysophosphatidic acid or LPA) into 1,2-diacyl-sn-glycerol-3-phosphate (phosphatidic acid or PA) by incorporating an acyl moiety at the sn-2 position of the glycerol backbone. Acts on LPA containing saturated or unsaturated fatty acids C15:0-C20:4 at the sn-1 position using C18:1-CoA as the acyl donor. Also acts on lysophosphatidylethanolamine using oleoyl-CoA, but not arachidonoyl-CoA, and lysophosphatidylinositol using arachidonoyl-CoA, but not oleoyl-CoA. Activity toward lysophosphatidylglycerol not detectable. This chain is 1-acyl-sn-glycerol-3-phosphate acyltransferase epsilon (AGPAT5), found in Homo sapiens (Human).